Here is a 670-residue protein sequence, read N- to C-terminus: Microtubule-associated protein ssm4 (670 aa).

A CAP-Gly domain is found at 23-65; the sequence is GSTDFESGIWLGVELLNGKGKNDGSVKGKRYFSCEKGKGIFVR. Coiled coils occupy residues 209–254 and 404–582; these read KSEL…KNSI and VKTR…KLAD. Position 460 is a phosphoserine (Ser-460). Thr-606 bears the Phosphothreonine mark.

Its subcellular location is the cytoplasm. The protein localises to the cytoskeleton. It localises to the spindle. Its function is as follows. Binds to nuclear microtubules with the effect of either modifying their structure or function. This then promotes meiotic nuclear division. This chain is Microtubule-associated protein ssm4 (ssm4), found in Schizosaccharomyces pombe (strain 972 / ATCC 24843) (Fission yeast).